The following is a 114-amino-acid chain: MAEITSAKATARTVRVSPRKSRLVLDNIRGKSVADAIAILKFTPNKAAGIIEGVLNSAIANAENNFGLEKANLVVSEAFANEGPTLKRFRPRAKGSASPINKRTAHITVVVAEK.

Belongs to the universal ribosomal protein uL22 family. Part of the 50S ribosomal subunit.

This protein binds specifically to 23S rRNA; its binding is stimulated by other ribosomal proteins, e.g. L4, L17, and L20. It is important during the early stages of 50S assembly. It makes multiple contacts with different domains of the 23S rRNA in the assembled 50S subunit and ribosome. Its function is as follows. The globular domain of the protein is located near the polypeptide exit tunnel on the outside of the subunit, while an extended beta-hairpin is found that lines the wall of the exit tunnel in the center of the 70S ribosome. This Streptococcus suis (strain 98HAH33) protein is Large ribosomal subunit protein uL22.